Consider the following 435-residue polypeptide: rRNA methyltransferase 3A, mitochondrial (435 aa).

A mitochondrion-targeting transit peptide spans 1–42 (MAALMYNVSRGLVMLGERSLFQRERYQILVNSRRFLRGLRRR). Residues 314–324 (KQLVSGQTENV) are compositionally biased toward polar residues. Residues 314-351 (KQLVSGQTENVSSDDYSESDSDDDDDEEEDEDSLPHVK) are disordered. Residues 328–345 (DYSESDSDDDDDEEEDED) show a composition bias toward acidic residues. Positions 369 and 402 each coordinate S-adenosyl-L-methionine.

It belongs to the class IV-like SAM-binding methyltransferase superfamily. RNA methyltransferase TrmH family.

It localises to the mitochondrion. It catalyses the reaction a uridine in rRNA + S-adenosyl-L-methionine = a 2'-O-methyluridine in rRNA + S-adenosyl-L-homocysteine + H(+). Its function is as follows. S-adenosyl-L-methionine-dependent 2'-O-ribose methyltransferase that catalyzes the formation of 2'-O-methylguanosine at position 1485 (Gm1485) in the mitochondrial large subunit ribosomal RNA (mtLSU rRNA), a conserved modification in the peptidyl transferase domain of the mtLSU rRNA. Also required for formation of 2'-O-methyluridine at position 1484 (Um1484) mediated by MRM2. In Danio rerio (Zebrafish), this protein is rRNA methyltransferase 3A, mitochondrial (mrm3a).